The following is a 492-amino-acid chain: PHO85 cyclin-8 (492 aa).

3 disordered regions span residues 1 to 32 (MAND…DNDS), 143 to 163 (SGSG…GTGR), and 223 to 252 (KVNS…ENES). The segment covering 8 to 20 (NKSLINDALTRSM) has biased composition (polar residues). Positions 23–32 (FYDDDDDNDS) are enriched in acidic residues. Position 32 is a phosphoserine (S32).

It belongs to the cyclin family. PHO80 subfamily. As to quaternary structure, forms a cyclin-CDK complex with PHO85.

It is found in the cytoplasm. It localises to the nucleus. Functionally, cyclin partner of the cyclin-dependent kinase (CDK) PHO85. Together with cyclin PCL10, negatively controls glycogen accumulation under favorable growth conditions. Involved in phosphorylation and negative regulation of glycogen synthase GSY2. Also has minor GLC8 kinase activity. This is PHO85 cyclin-8 (PCL8) from Saccharomyces cerevisiae (strain ATCC 204508 / S288c) (Baker's yeast).